The sequence spans 566 residues: Proline--tRNA ligase 1 (566 aa).

The protein belongs to the class-II aminoacyl-tRNA synthetase family. ProS type 1 subfamily. Homodimer.

The protein resides in the cytoplasm. The catalysed reaction is tRNA(Pro) + L-proline + ATP = L-prolyl-tRNA(Pro) + AMP + diphosphate. Functionally, catalyzes the attachment of proline to tRNA(Pro) in a two-step reaction: proline is first activated by ATP to form Pro-AMP and then transferred to the acceptor end of tRNA(Pro). As ProRS can inadvertently accommodate and process non-cognate amino acids such as alanine and cysteine, to avoid such errors it has two additional distinct editing activities against alanine. One activity is designated as 'pretransfer' editing and involves the tRNA(Pro)-independent hydrolysis of activated Ala-AMP. The other activity is designated 'posttransfer' editing and involves deacylation of mischarged Ala-tRNA(Pro). The misacylated Cys-tRNA(Pro) is not edited by ProRS. In Bacillus thuringiensis subsp. konkukian (strain 97-27), this protein is Proline--tRNA ligase 1.